Consider the following 109-residue polypeptide: uncharacterized protein (109 aa).

The next 2 helical transmembrane spans lie at 24–44 (SLGILMGGSTSCMVGMNSAFV) and 68–88 (VIVLFNTLVFRSPLFLFSIFI).

The protein resides in the membrane. This is an uncharacterized protein from Saccharomyces cerevisiae (strain ATCC 204508 / S288c) (Baker's yeast).